Reading from the N-terminus, the 322-residue chain is 4-hydroxythreonine-4-phosphate dehydrogenase (322 aa).

Substrate-binding residues include histidine 126 and threonine 127. Histidine 160, histidine 205, and histidine 260 together coordinate a divalent metal cation. Lysine 268, asparagine 277, and arginine 286 together coordinate substrate.

It belongs to the PdxA family. In terms of assembly, homodimer. The cofactor is Zn(2+). Mg(2+) is required as a cofactor. It depends on Co(2+) as a cofactor.

Its subcellular location is the cytoplasm. It catalyses the reaction 4-(phosphooxy)-L-threonine + NAD(+) = 3-amino-2-oxopropyl phosphate + CO2 + NADH. It functions in the pathway cofactor biosynthesis; pyridoxine 5'-phosphate biosynthesis; pyridoxine 5'-phosphate from D-erythrose 4-phosphate: step 4/5. In terms of biological role, catalyzes the NAD(P)-dependent oxidation of 4-(phosphooxy)-L-threonine (HTP) into 2-amino-3-oxo-4-(phosphooxy)butyric acid which spontaneously decarboxylates to form 3-amino-2-oxopropyl phosphate (AHAP). The sequence is that of 4-hydroxythreonine-4-phosphate dehydrogenase from Paracoccus denitrificans (strain Pd 1222).